Here is a 1275-residue protein sequence, read N- to C-terminus: MVKMDVVRTTGFFLRSEPTTCRITTFAYSAEIIYFHAETTFLFEKIMKEGNELEKYSKIELNSEIWEDEEEEDNSGIVSQNERLMKLVNKQREIIYELHKDLEKVKKDNTSLRMRLSKYESTDSFPSSQPSRANSPQSDSYSSPYEKGKLFPKISLKSSKDVPTASAHISSSDHEKSSSVSLSALNNYNKTTDIKARSLDRLSDMTRPKLLLNTKRSHRSSEEPGASSPVTSPILKDSQKERIQALRNKAIKTYSVSTESAERIDSIRSDNLSPLSLNTSSFRRPITKPTPFNSDSNISIDPKDNNSNKQDHFAEIEDELRQQFLDIKVGRANASSPRRKSISIVKPHGISSPKHSTNNLSSKSGKFHSDFRVVSENVLLQARSETNSPIIENKEANNFLAPTSNVPAYSTPARPTESPPPPPISSSSTTPRPDDKPSLPPRGLSEDNDSLSLQKTGSSDTRRSSFSTLKIPDSDICFTRRRSDSNRTWTVIDPHHSQSFDNDILAEIPTSKLDNSSQKSPGKLSSKGLLNSFSPISPFSKSKSHNHHPSSQVEKSTSNSKGSMLPLDTLYNNKLSFRLDESLVRYLRFELMKTSLASLSPDFDCIGLQFVVGVSASSHLASQWKDEVWSFTRSIGECRSFATSFVLDIGAPPFPTLDWFTNDSSVIQNELLRRSVDTYFRYIFQTDLKLEQRIKLLEFLSSDTLREYLHDVFFLPPEHAQKEGVLLKYIENSGLVSRYFYLKDNILYFAENRNSPVLGTIHLKDAQVNRYNANLPIFSIIDPPHEFLTGENYQSAFVIQEKQTETRTGTATVHVLLARDVEDQKSWLRAILRQVPGSTSPLNASPFSVLSSDFPGSSRYRDQSSPIRFYGKADSRPVSQEAILSQDISSSPSPVLPPSENVASYADDSLVSNLTMSPKLRDSMEQVPLENHREFEISDRVSELSFDSSTGSVLEIADTRRNQDAPEKHVPVIEIQSSRPSLEKTDQSTPVELLIDSHSQNSQNEEKRSRMKFWAFPHHKAENYEQISDTNIPVIETNVMLSPSSTTSAEPLQKHIVRKSGIFGLPLNEAVNISTQFNDSGLPIVVYRCIEYLESCRAEKEEGIYRLSGSASTIKHLKEQFNEGVDYDLLSSDEEFDVHVIAGLLKLYLRNLPTNLLDTSMHKLFELLPNVPNDSAALGELCDVISKLPPENFALLDSLLHHLRRIIAFEKVNKMNIRNVCIVFSPTLNIPSDIFMMLILNYDHIFTDISRQTNGAQNESDSDVSDDNGEDNEFF.

Disordered stretches follow at residues 118-146 (KYESTDSFPSSQPSRANSPQSDSYSSPYE), 213-238 (NTKRSHRSSEEPGASSPVTSPILKDS), 280-306 (SSFRRPITKPTPFNSDSNISIDPKDNN), and 335-365 (SSPRRKSISIVKPHGISSPKHSTNNLSSKSG). Residues 122 to 143 (TDSFPSSQPSRANSPQSDSYSS) are compositionally biased toward polar residues. Polar residues-rich tracts occupy residues 290–299 (TPFNSDSNIS) and 353–364 (PKHSTNNLSSKS). Serine 388 carries the phosphoserine modification. 2 disordered regions span residues 390–466 (IIEN…RSSF) and 539–561 (FSKSKSHNHHPSSQVEKSTSNSK). Composition is skewed to polar residues over residues 450–466 (SLSLQKTGSSDTRRSSF) and 552–561 (QVEKSTSNSK). The 118-residue stretch at 719-836 (HAQKEGVLLK…WLRAILRQVP (118 aa)) folds into the PH domain. Residues 957–971 (ADTRRNQDAPEKHVP) are compositionally biased toward basic and acidic residues. Disordered stretches follow at residues 957–988 (ADTRRNQDAPEKHVPVIEIQSSRPSLEKTDQS) and 1254–1275 (NGAQNESDSDVSDDNGEDNEFF). The 211-residue stretch at 1065–1275 (LPLNEAVNIS…DDNGEDNEFF (211 aa)) folds into the Rho-GAP domain. Residues 1260–1275 (SDSDVSDDNGEDNEFF) show a composition bias toward acidic residues.

Its subcellular location is the nucleus. In terms of biological role, GTPase-activating protein for Rho-type proteins. The polypeptide is Probable Rho-type GTPase-activating protein 2 (rga2) (Schizosaccharomyces pombe (strain 972 / ATCC 24843) (Fission yeast)).